Here is a 1930-residue protein sequence, read N- to C-terminus: Transport and Golgi organization protein 1 homolog (1930 aa).

The signal sequence occupies residues Met-1–Ser-24. The Lumenal segment spans residues Asp-25–Ser-1171. Positions Met-45 to Lys-107 constitute an SH3 domain. Disordered regions lie at residues Leu-144 to Thr-263, Glu-317 to Lys-496, Leu-547 to Gln-737, Thr-754 to Ile-891, and Thr-1018 to Ala-1149. Residues Glu-152 to Ser-189 are compositionally biased toward basic and acidic residues. Residues Ser-197 to Glu-211 are compositionally biased toward polar residues. Ser-229 is subject to Phosphoserine. Positions Glu-247–Ala-256 are enriched in polar residues. Acidic residues predominate over residues Glu-317–Asp-330. Residues Ser-338 to Glu-368 show a composition bias toward basic and acidic residues. An N-linked (GlcNAc...) asparagine glycan is attached at Asn-360. Residues Asp-420–Val-430 show a composition bias toward acidic residues. Basic and acidic residues-rich tracts occupy residues Glu-431–Glu-442 and Gly-451–Lys-461. N-linked (GlcNAc...) asparagine glycosylation is present at Asn-631. A compositionally biased stretch (basic and acidic residues) spans Glu-661–Glu-677. The segment covering Asp-692 to Asp-701 has biased composition (acidic residues). Over residues Val-715–Ser-726 the composition is skewed to polar residues. Positions Glu-791–Ala-800 are enriched in basic and acidic residues. Ser-856 carries the phosphoserine modification. Positions Gly-1030–Gln-1039 are enriched in basic and acidic residues. Composition is skewed to polar residues over residues Pro-1040–Leu-1054 and Gln-1115–Ser-1127. The segment covering Gln-1128 to Asp-1137 has biased composition (basic and acidic residues). An intramembrane segment occupies Ala-1172–Pro-1192. The Lumenal portion of the chain corresponds to Asp-1193–Tyr-1202. Residues Gly-1203–Phe-1223 form a helical membrane-spanning segment. The Cytoplasmic portion of the chain corresponds to Ser-1224 to Pro-1930. Coiled-coil stretches lie at residues Tyr-1236–Asp-1329 and Leu-1359–Leu-1422. Residues Val-1238–Pro-1677 form a mediates interaction with MIA2 region. The tract at residues Glu-1447–Glu-1472 is disordered. Ser-1458 carries the post-translational modification Phosphoserine. Positions Asn-1514 to Met-1662 form a coiled coil. Disordered stretches follow at residues Ile-1669 to Met-1796, Pro-1801 to Arg-1820, and Ala-1840 to Pro-1930. Polar residues predominate over residues Pro-1677–Phe-1694. Ser-1693 and Ser-1705 each carry phosphoserine. Residues Pro-1706–Arg-1715 show a composition bias toward pro residues. Over residues Ser-1722–Leu-1738 the composition is skewed to basic and acidic residues. 4 positions are modified to phosphoserine: Ser-1733, Ser-1754, Ser-1766, and Ser-1770. Positions Pro-1760–Lys-1773 are enriched in low complexity. The proline-rich domain (PRD); mediates interaction with the COPII coat subunits SEC23A and SEC23B stretch occupies residues Asp-1776–Pro-1930. The span at Pro-1801 to Gln-1811 shows a compositional bias: pro residues. Asymmetric dimethylarginine is present on Arg-1805. The segment at Pro-1809–Ser-1869 is SEC16A-interacting region (SIR); required for its localization to endoplasmic reticulum exit sites and for its interaction with SEC16A. The segment covering Gly-1846–Leu-1858 has biased composition (basic and acidic residues). Positions Arg-1881–Ala-1898 are enriched in pro residues. The residue at position 1915 (Ser-1915) is a Phosphoserine. The segment covering Ser-1915–Pro-1930 has biased composition (polar residues).

Belongs to the MIA/OTOR family. Tango1 subfamily. Interacts with MIA2. Interacts (via SH3 domain) with COL7A1. Interacts with the COPII coat subunits SEC23A, SEC23B and maybe SEC24C. May interact with APOB and MIA2. Interacts with SEC16A.

It is found in the endoplasmic reticulum membrane. Plays a role in the transport of cargos that are too large to fit into COPII-coated vesicles and require specific mechanisms to be incorporated into membrane-bound carriers and exported from the endoplasmic reticulum. This protein is required for collagen VII (COL7A1) secretion by loading COL7A1 into transport carriers. It may participate in cargo loading of COL7A1 at endoplasmic reticulum exit sites by binding to COPII coat subunits Sec23/24 and guiding SH3-bound COL7A1 into a growing carrier. Does not play a role in global protein secretion and is apparently specific to COL7A1 cargo loading. However, it may participate in secretion of other proteins in cells that do not secrete COL7A1. It is also specifically required for the secretion of lipoproteins by participating in their export from the endoplasmic reticulum. Required for correct assembly of COPII coat components at endoplasmic reticulum exit sites (ERES) and for the localization of SEC16A and membrane-bound ER-resident complexes consisting of MIA2 and PREB/SEC12 to ERES. The polypeptide is Transport and Golgi organization protein 1 homolog (Mus musculus (Mouse)).